The chain runs to 604 residues: Microtubule-associated protein 70-4 (604 aa).

Residues 1-33 form a disordered region; the sequence is MEERGFMSPSLAISASYREGGSKGMSRRRSMRP. Residues 49–351 adopt a coiled-coil conformation; that stretch reads DPVRIELNRL…ADRAAKSEAQ (303 aa). The required for targeting to microtubules stretch occupies residues 233-470; sequence IIDKMHRQKV…PLNHKSSEGT (238 aa). Disordered stretches follow at residues 367–422 and 434–495; these read LKGP…RSLT and GTSR…NDSV. Residues 371 to 385 show a composition bias toward low complexity; that stretch reads TSSSSRGTSVGRSSS. Composition is skewed to polar residues over residues 401-422 and 468-478; these read PKIT…RSLT and EGTSRGESPSS. The stretch at 521-569 forms a coiled coil; sequence LRDKDEAIEMLAKKVETLTKAMDVEAKKMRREVAVMGKEVAAMRVVDKG.

This sequence belongs to the MAP70 family.

The protein localises to the cytoplasm. It localises to the cytoskeleton. Plant-specific protein that interact with microtubules. This Arabidopsis thaliana (Mouse-ear cress) protein is Microtubule-associated protein 70-4 (MAP70.4).